The chain runs to 514 residues: Ferrochelatase-2, chloroplastic (514 aa).

The protein belongs to the ferrochelatase family.

The protein resides in the plastid. It localises to the chloroplast. The enzyme catalyses heme b + 2 H(+) = protoporphyrin IX + Fe(2+). It functions in the pathway porphyrin-containing compound metabolism; protoheme biosynthesis; protoheme from protoporphyrin-IX: step 1/1. In terms of biological role, catalyzes the ferrous insertion into protoporphyrin IX. This Cucumis sativus (Cucumber) protein is Ferrochelatase-2, chloroplastic (HEMH).